We begin with the raw amino-acid sequence, 333 residues long: Adenosine deaminase (333 aa).

2 residues coordinate Zn(2+): histidine 12 and histidine 14. Substrate-binding residues include histidine 14, aspartate 16, and glycine 170. Histidine 197 lines the Zn(2+) pocket. The active-site Proton donor is the glutamate 200. Aspartate 278 is a binding site for Zn(2+). Aspartate 279 provides a ligand contact to substrate.

The protein belongs to the metallo-dependent hydrolases superfamily. Adenosine and AMP deaminases family. Adenosine deaminase subfamily. Zn(2+) serves as cofactor.

The enzyme catalyses adenosine + H2O + H(+) = inosine + NH4(+). The catalysed reaction is 2'-deoxyadenosine + H2O + H(+) = 2'-deoxyinosine + NH4(+). Catalyzes the hydrolytic deamination of adenosine and 2-deoxyadenosine. The sequence is that of Adenosine deaminase from Proteus mirabilis (strain HI4320).